Reading from the N-terminus, the 152-residue chain is UPF0735 ACT domain-containing protein CTC_00116 (152 aa).

In terms of domain architecture, ACT spans 76 to 151 (IISVTLNHRP…NVIKLDLIAM (76 aa)).

This sequence belongs to the UPF0735 family.

This Clostridium tetani (strain Massachusetts / E88) protein is UPF0735 ACT domain-containing protein CTC_00116.